Reading from the N-terminus, the 380-residue chain is Cytochrome b (380 aa).

A run of 4 helical transmembrane segments spans residues 34–54 (FGSL…FLAM), 78–99 (WLVR…YLHI), 114–134 (WNIG…GYVL), and 179–199 (FFAF…LHLL). Heme b-binding residues include His84 and His98. 2 residues coordinate heme b: His183 and His197. Residue His202 coordinates a ubiquinone. 4 helical membrane passes run 227–247 (YKDT…SMLS), 289–309 (LGGV…PMIH), 321–341 (MTQF…WIGG), and 348–368 (FIEI…IFMP).

Belongs to the cytochrome b family. The cytochrome bc1 complex contains 3 respiratory subunits (MT-CYB, CYC1 and UQCRFS1), 2 core proteins (UQCRC1 and UQCRC2) and probably 6 low-molecular weight proteins. The cofactor is heme b.

It localises to the mitochondrion inner membrane. Its function is as follows. Component of the ubiquinol-cytochrome c reductase complex (complex III or cytochrome b-c1 complex) that is part of the mitochondrial respiratory chain. The b-c1 complex mediates electron transfer from ubiquinol to cytochrome c. Contributes to the generation of a proton gradient across the mitochondrial membrane that is then used for ATP synthesis. The protein is Cytochrome b (mt-cyb) of Ranodon sibiricus (Siberian salamander).